Here is a 161-residue protein sequence, read N- to C-terminus: Large ribosomal subunit protein uL10 (161 aa).

The protein belongs to the universal ribosomal protein uL10 family. Part of the ribosomal stalk of the 50S ribosomal subunit. The N-terminus interacts with L11 and the large rRNA to form the base of the stalk. The C-terminus forms an elongated spine to which L12 dimers bind in a sequential fashion forming a multimeric L10(L12)X complex.

In terms of biological role, forms part of the ribosomal stalk, playing a central role in the interaction of the ribosome with GTP-bound translation factors. The sequence is that of Large ribosomal subunit protein uL10 from Buchnera aphidicola subsp. Cinara cedri (strain Cc).